The sequence spans 608 residues: Glutamyl-tRNA(Gln) amidotransferase subunit E (608 aa).

The segment at 402-422 (EETRGANPDGTTRFLRPRPGA) is disordered.

Belongs to the GatB/GatE family. GatE subfamily. In terms of assembly, heterodimer of GatD and GatE.

It catalyses the reaction L-glutamyl-tRNA(Gln) + L-glutamine + ATP + H2O = L-glutaminyl-tRNA(Gln) + L-glutamate + ADP + phosphate + H(+). In terms of biological role, allows the formation of correctly charged Gln-tRNA(Gln) through the transamidation of misacylated Glu-tRNA(Gln) in organisms which lack glutaminyl-tRNA synthetase. The reaction takes place in the presence of glutamine and ATP through an activated gamma-phospho-Glu-tRNA(Gln). The GatDE system is specific for glutamate and does not act on aspartate. This chain is Glutamyl-tRNA(Gln) amidotransferase subunit E, found in Pyrobaculum calidifontis (strain DSM 21063 / JCM 11548 / VA1).